The primary structure comprises 344 residues: MVSASSFYVPAAVKKNFNALVRHVKGVLSVLDECDPKNNVADQVNLLLCAKEMQSEQVAALLSVLLIDTWGYRLFSYNLRKVSVEGLGFAQETARWKGVDIVLGYHHPDLGFLAINPKNPSNASLVEGFRKNELLLVYVGKQDRGPLDERIADEVAKGLIALIENRKFVVPKEILSGVFAFVSTKKSEGSGKRVRSAKKSGADAARASEGATCDRASSESVSPTARPPAQASAGPIRMSQLISVPVSNELFHNGNVEAWKRIIRSYNARYPSSEVIVFYDGERIVDINTLFKWGKVKHGSVIQFAVSGEEIKDLSKLSKYFKEGASSRFEVFLHGSPDTVLNLF.

The disordered stretch occupies residues 190–232 (SGKRVRSAKKSGADAARASEGATCDRASSESVSPTARPPAQAS).

This is an uncharacterized protein from Treponema pallidum (strain Nichols).